The chain runs to 206 residues: Histidine biosynthesis bifunctional protein HisIE (206 aa).

The interval 1 to 114 (MLKKINFIDI…FQVPSENLFF (114 aa)) is phosphoribosyl-AMP cyclohydrolase. Residues 115-206 (LHDLDCMLKF…NLKMRSNKQV (92 aa)) are phosphoribosyl-ATP pyrophosphohydrolase.

In the N-terminal section; belongs to the PRA-CH family. This sequence in the C-terminal section; belongs to the PRA-PH family.

The protein resides in the cytoplasm. The catalysed reaction is 1-(5-phospho-beta-D-ribosyl)-ATP + H2O = 1-(5-phospho-beta-D-ribosyl)-5'-AMP + diphosphate + H(+). It catalyses the reaction 1-(5-phospho-beta-D-ribosyl)-5'-AMP + H2O = 1-(5-phospho-beta-D-ribosyl)-5-[(5-phospho-beta-D-ribosylamino)methylideneamino]imidazole-4-carboxamide. Its pathway is amino-acid biosynthesis; L-histidine biosynthesis; L-histidine from 5-phospho-alpha-D-ribose 1-diphosphate: step 2/9. It functions in the pathway amino-acid biosynthesis; L-histidine biosynthesis; L-histidine from 5-phospho-alpha-D-ribose 1-diphosphate: step 3/9. The chain is Histidine biosynthesis bifunctional protein HisIE (hisI) from Buchnera aphidicola subsp. Baizongia pistaciae (strain Bp).